We begin with the raw amino-acid sequence, 123 residues long: Probable non-functional immunoglobulin lambda variable 11-55 (123 aa).

Residues 1 to 19 (MALTPLLLLLLSHCTGSLS) form the signal peptide. Residues 20 to 44 (RPVLTQPPSLSASPGATARLPCTLS) form a framework-1 region. The 103-residue stretch at 21-123 (PVLTQPPSLS…YCQVYESSAN (103 aa)) folds into the Ig-like domain. Residues C41 and C115 are joined by a disulfide bond. The complementarity-determining-1 stretch occupies residues 45 to 53 (SDLSVGGKN). A framework-2 region spans residues 54–70 (MFWYQQKLGSSPRLFLY). The interval 71–77 (HYSDSDK) is complementarity-determining-2. The tract at residues 78–115 (QLGPGVPSRVSGSKETSSNTAFLLISGLQPEDEADYYC) is framework-3. The complementarity-determining-3 stretch occupies residues 116-123 (QVYESSAN).

In terms of assembly, immunoglobulins are composed of two identical heavy chains and two identical light chains; disulfide-linked.

The protein localises to the secreted. It localises to the cell membrane. In terms of biological role, probable non-functional open reading frame (ORF) of V region of the variable domain of immunoglobulin light chains. Non-functional ORF generally cannot participate in the synthesis of a productive immunoglobulin chain due to altered V-(D)-J or switch recombination and/or splicing site (at mRNA level) and/or conserved amino acid change (protein level). Immunoglobulins, also known as antibodies, are membrane-bound or secreted glycoproteins produced by B lymphocytes. In the recognition phase of humoral immunity, the membrane-bound immunoglobulins serve as receptors which, upon binding of a specific antigen, trigger the clonal expansion and differentiation of B lymphocytes into immunoglobulins-secreting plasma cells. Secreted immunoglobulins mediate the effector phase of humoral immunity, which results in the elimination of bound antigens. The antigen binding site is formed by the variable domain of one heavy chain, together with that of its associated light chain. Thus, each immunoglobulin has two antigen binding sites with remarkable affinity for a particular antigen. The variable domains are assembled by a process called V-(D)-J rearrangement and can then be subjected to somatic hypermutations which, after exposure to antigen and selection, allow affinity maturation for a particular antigen. This Homo sapiens (Human) protein is Probable non-functional immunoglobulin lambda variable 11-55.